A 543-amino-acid polypeptide reads, in one-letter code: RuBisCO large subunit-binding protein subunit alpha, chloroplastic (543 aa).

The transit peptide at 1–2 (GA) directs the protein to the chloroplast.

This sequence belongs to the chaperonin (HSP60) family. In terms of assembly, oligomer of probably six alpha and six beta subunits.

It is found in the plastid. The protein localises to the chloroplast. This protein binds RuBisCO small and large subunits and is implicated in the assembly of the enzyme oligomer. The sequence is that of RuBisCO large subunit-binding protein subunit alpha, chloroplastic from Triticum aestivum (Wheat).